We begin with the raw amino-acid sequence, 312 residues long: Protoheme IX farnesyltransferase (312 aa).

Residues 1-36 (MNKSNTAIDPTNVIEAGPDSSVADVQQKSWKDYLVL) are Cytoplasmic-facing. Residues 37–55 (AKQGIVTSNLITTFAGIYL) form a helical membrane-spanning segment. Topologically, residues 56-69 (AIVYTGTVFTMHLD) are extracellular. The chain crosses the membrane as a helical span at residues 70 to 88 (TMIFALLGAALVMAGGCTL). The Cytoplasmic portion of the chain corresponds to 89 to 110 (NNYIDRDIDHLMERTKERPTVT). A helical membrane pass occupies residues 111-129 (GRFSAKHVLLVGLAQAALG). Residues 130-138 (IIFLALTTP) are Extracellular-facing. The helical transmembrane segment at 139 to 157 (TAAVIGLIGLFIYVVLYTM) threads the bilayer. Over 158–228 (WTKRTTTLNT…YRAAGIPMLP (71 aa)) the chain is Cytoplasmic. Residues 229-247 (VVAGFEMTKRQMVVYVAAL) traverse the membrane as a helical segment. The Extracellular segment spans residues 248 to 259 (LPVSLMLYPFGL). A helical membrane pass occupies residues 260–275 (VYTIVAAVLGVGWLAL). Over 276-296 (GIAGFKMKDDIKWARLMFVYS) the chain is Cytoplasmic. A helical transmembrane segment spans residues 297 to 307 (LNYLTILFVLM). At 308–312 (VIVHF) the chain is on the extracellular side.

The protein belongs to the UbiA prenyltransferase family.

Its subcellular location is the cell membrane. It catalyses the reaction heme b + (2E,6E)-farnesyl diphosphate + H2O = Fe(II)-heme o + diphosphate. The protein operates within porphyrin-containing compound metabolism; heme O biosynthesis; heme O from protoheme: step 1/1. Functionally, converts protoheme IX and farnesyl diphosphate to heme O. The protein is Protoheme IX farnesyltransferase (ctaB) of Alkalihalophilus pseudofirmus (strain ATCC BAA-2126 / JCM 17055 / OF4) (Bacillus pseudofirmus).